The sequence spans 130 residues: uncharacterized protein (130 aa).

The disordered stretch occupies residues 85-116; it reads NDSDDDCSENDSDGDCSENDSDNDYSENESDC.

It belongs to the mimivirus L5 family.

This is an uncharacterized protein from Acanthamoeba polyphaga mimivirus (APMV).